The primary structure comprises 402 residues: S-adenosylmethionine synthase (402 aa).

Gly-137–Asp-142 is an ATP binding site.

This sequence belongs to the AdoMet synthase 2 family. Mg(2+) serves as cofactor.

The catalysed reaction is L-methionine + ATP + H2O = S-adenosyl-L-methionine + phosphate + diphosphate. It participates in amino-acid biosynthesis; S-adenosyl-L-methionine biosynthesis; S-adenosyl-L-methionine from L-methionine: step 1/1. In terms of biological role, catalyzes the formation of S-adenosylmethionine from methionine and ATP. The sequence is that of S-adenosylmethionine synthase from Pyrobaculum neutrophilum (strain DSM 2338 / JCM 9278 / NBRC 100436 / V24Sta) (Thermoproteus neutrophilus).